Consider the following 232-residue polypeptide: UPF0502 protein Aave_3438 (232 aa).

This sequence belongs to the UPF0502 family.

This chain is UPF0502 protein Aave_3438, found in Paracidovorax citrulli (strain AAC00-1) (Acidovorax citrulli).